We begin with the raw amino-acid sequence, 825 residues long: MVSSKLSFVATAVAALAPLASAFDASSRSNLAIYWGQGPNQLRLSHFCQETSLDIINIGFINYFPDMSPGHWPGSNFGNQCDGSVYVTNDGVVTKLLSGCHQIMEDIPICQAAGKKVLLSIGGAYPPDQSILSEDSAVAFATFLWGAFGPVAEGWEGPRPFGDVVVDGFDFDIEHNGGFGYATMVNTFRQYFNQVPERKFYLSAAPQCIIPDAQLSDAIFNAAFDFIWIQYYNTAACSAKSFIDTSLGTFNFDAWVTVLKASASKDAKLYVGLPASETAANQGYYLTPDEVESLVSTYMDRYPDTFGGIMLWEATASENNQIDGAPYADHMKDILLHCDPSPPVTSSSAVPSSTPVTTPSPSSSAVPSSTPAVSETPSPSSSAVPSSTPVASSTPVVPGTSASSSPVSSSSAIAPSTPVVPGTSTPSSTPVASSTPVVPGTSASSSPVSSSSAVASSTPVVPGTSVPSSTPAIPGGSSSSSEAVASSTPLVTLTLTVSPTPAPSSSESSSTDLSSSTQTDVGTAPSQPAGPSTTATATTSSSSSSTDESSTTVGSGNGNGSGSTTTTAATDSITAAPTATSSATATGATSEPVTITTIIVTSYIDICPTGFTTVTTTYTTTYCPGTNTATATATVTNPPSGPGGAGSQTTAPTVPEGWTTTVTVCTQCAAKPTTVTLTLPVTETGSTSTDAVPAPPAATGEGSNPTQPSGASPTGGNGSFSEEPVPPPAVTQVSTSTEIVTLVRPTSSRPLILGTGTVHPSSTLAVKPSAKPSGQNSGSSSHVPIPPSYTQEAVSPLSTGAASRVTGLGHGLVLTVLTLSAFFVL.

Positions 1–22 (MVSSKLSFVATAVAALAPLASA) are cleaved as a signal peptide. Residues 29 to 338 (SNLAIYWGQG…DHMKDILLHC (310 aa)) enclose the GH18 domain. The active-site Proton donor is E174. 3 disordered regions span residues 338-568 (CDPS…TTTA), 680-736 (PVTE…VSTS), and 750-792 (PLIL…YTQE). The segment covering 344 to 554 (VTSSSAVPSS…STDESSTTVG (211 aa)) has biased composition (low complexity). An N-linked (GlcNAc...) asparagine glycan is attached at N559. Residues 701-712 (EGSNPTQPSGAS) show a composition bias toward polar residues. N717 is a glycosylation site (N-linked (GlcNAc...) asparagine). The span at 772–792 (PSGQNSGSSSHVPIPPSYTQE) shows a compositional bias: polar residues. G800 carries GPI-anchor amidated glycine lipidation. The propeptide at 801 to 825 (AASRVTGLGHGLVLTVLTLSAFFVL) is removed in mature form.

This sequence belongs to the glycosyl hydrolase 18 family. Chitinase class III subfamily. Post-translationally, O-mannosylated by pmt4.

It localises to the cell membrane. It is found in the secreted. The protein resides in the cell wall. It carries out the reaction Random endo-hydrolysis of N-acetyl-beta-D-glucosaminide (1-&gt;4)-beta-linkages in chitin and chitodextrins.. Its activity is regulated as follows. The cyclic peptide natural product argifin acts as a specific inhibitor. GPI-anchored chitinase involved in the degradation of chitin, a component of the cell walls of fungi and exoskeletal elements of some animals (including worms and arthropods). Required to reshape the cell wall at the sites where cell wall remodeling and/or cell wall maturation actively take place such as sites of conidia formation. The sequence is that of Endochitinase A1 (chiA1) from Aspergillus fumigatus (Neosartorya fumigata).